Here is a 317-residue protein sequence, read N- to C-terminus: Putative ribose-phosphate pyrophosphokinase (317 aa).

The interval 211–224 is binding of phosphoribosylpyrophosphate; that stretch reads GRDVIVLDDEIAKG.

The protein belongs to the ribose-phosphate pyrophosphokinase family.

The enzyme catalyses D-ribose 5-phosphate + ATP = 5-phospho-alpha-D-ribose 1-diphosphate + AMP + H(+). This Streptomyces coelicolor (strain ATCC BAA-471 / A3(2) / M145) protein is Putative ribose-phosphate pyrophosphokinase.